The chain runs to 253 residues: GTP cyclohydrolase 1 type 2 homolog (253 aa).

The a divalent metal cation site is built by His64, His65, Asp101, His222, and Glu226.

It belongs to the GTP cyclohydrolase I type 2/NIF3 family. Homohexamer.

The protein is GTP cyclohydrolase 1 type 2 homolog of Halobacterium salinarum (strain ATCC 700922 / JCM 11081 / NRC-1) (Halobacterium halobium).